The chain runs to 349 residues: 4-hydroxythreonine-4-phosphate dehydrogenase (349 aa).

Substrate is bound by residues histidine 141 and threonine 142. A divalent metal cation is bound by residues histidine 176, histidine 221, and histidine 276. Lysine 284, asparagine 293, and arginine 302 together coordinate substrate.

Belongs to the PdxA family. As to quaternary structure, homodimer. It depends on Zn(2+) as a cofactor. Requires Mg(2+) as cofactor. The cofactor is Co(2+).

The protein resides in the cytoplasm. It catalyses the reaction 4-(phosphooxy)-L-threonine + NAD(+) = 3-amino-2-oxopropyl phosphate + CO2 + NADH. It functions in the pathway cofactor biosynthesis; pyridoxine 5'-phosphate biosynthesis; pyridoxine 5'-phosphate from D-erythrose 4-phosphate: step 4/5. Functionally, catalyzes the NAD(P)-dependent oxidation of 4-(phosphooxy)-L-threonine (HTP) into 2-amino-3-oxo-4-(phosphooxy)butyric acid which spontaneously decarboxylates to form 3-amino-2-oxopropyl phosphate (AHAP). This is 4-hydroxythreonine-4-phosphate dehydrogenase from Methylorubrum extorquens (strain CM4 / NCIMB 13688) (Methylobacterium extorquens).